The following is a 431-amino-acid chain: Enolase (431 aa).

A (2R)-2-phosphoglycerate-binding site is contributed by Gln-168. Glu-210 acts as the Proton donor in catalysis. The Mg(2+) site is built by Asp-247, Glu-291, and Asp-318. (2R)-2-phosphoglycerate contacts are provided by Lys-343, Arg-372, Ser-373, and Lys-394. Catalysis depends on Lys-343, which acts as the Proton acceptor.

It belongs to the enolase family. In terms of assembly, component of the RNA degradosome, a multiprotein complex involved in RNA processing and mRNA degradation. Mg(2+) is required as a cofactor.

Its subcellular location is the cytoplasm. It localises to the secreted. The protein localises to the cell surface. The catalysed reaction is (2R)-2-phosphoglycerate = phosphoenolpyruvate + H2O. The protein operates within carbohydrate degradation; glycolysis; pyruvate from D-glyceraldehyde 3-phosphate: step 4/5. Its function is as follows. Catalyzes the reversible conversion of 2-phosphoglycerate (2-PG) into phosphoenolpyruvate (PEP). It is essential for the degradation of carbohydrates via glycolysis. The polypeptide is Enolase (Acinetobacter baumannii (strain SDF)).